Here is a 599-residue protein sequence, read N- to C-terminus: Sulfite reductase [NADPH] flavoprotein alpha-component (599 aa).

Residues 64-202 (VTLISASQTG…AASEWRARVV (139 aa)) enclose the Flavodoxin-like domain. FMN-binding positions include 70 to 75 (SQTGNA), 117 to 120 (STQG), and 153 to 162 (LGDTSYEFFC). One can recognise an FAD-binding FR-type domain in the interval 234–448 (DAPLIATLSV…IEHNDNFRLP (215 aa)). Residues threonine 322, alanine 356, 386–389 (RLYS), 404–406 (TVG), tyrosine 410, and 419–422 (GGAS) contribute to the FAD site. NADP(+)-binding positions include 519 to 520 (SR), 525 to 529 (KIYVQ), and aspartate 561. Tyrosine 599 contributes to the FAD binding site.

Belongs to the NADPH-dependent sulphite reductase flavoprotein subunit CysJ family. The protein in the N-terminal section; belongs to the flavodoxin family. This sequence in the C-terminal section; belongs to the flavoprotein pyridine nucleotide cytochrome reductase family. Alpha(8)-beta(8). The alpha component is a flavoprotein, the beta component is a hemoprotein. FAD serves as cofactor. The cofactor is FMN.

The catalysed reaction is hydrogen sulfide + 3 NADP(+) + 3 H2O = sulfite + 3 NADPH + 4 H(+). It participates in sulfur metabolism; hydrogen sulfide biosynthesis; hydrogen sulfide from sulfite (NADPH route): step 1/1. Component of the sulfite reductase complex that catalyzes the 6-electron reduction of sulfite to sulfide. This is one of several activities required for the biosynthesis of L-cysteine from sulfate. The flavoprotein component catalyzes the electron flow from NADPH -&gt; FAD -&gt; FMN to the hemoprotein component. This Salmonella typhimurium (strain LT2 / SGSC1412 / ATCC 700720) protein is Sulfite reductase [NADPH] flavoprotein alpha-component.